The following is a 460-amino-acid chain: Telomere-binding protein homolog (460 aa).

This sequence belongs to the telombin family.

The protein localises to the nucleus. The protein resides in the chromosome. It localises to the telomere. May bind telomeric T4G4 sequences. In Euplotes crassus, this protein is Telomere-binding protein homolog.